Consider the following 287-residue polypeptide: MYMDLTLGGALLQVEEATEEEEEEEEEEQALGQEPAPAAAAAALVLGRRHGVVVGGGGGGVVVAAEREHMFDKVVTPSDVGKLNRLVVPKQHAERFFPAAAAGTQLCFEDRAGTPWRFRYSYWGSSQSYVMTKGWSRFVRAARLSAGDTVSFSRAADGRYFIDYRHCHRHGGRDISFASAATAMPAAAWPLFGRVQTAAPVSYGGGHGSAAAATMFLDTVAPVAAAGGHRGEVGPSGQRSFRLFGVNVECGGDVDAAAEEEDADDDVDDGDHRRGEEMELVMWTNHR.

Residues alanine 17–glutamine 29 are compositionally biased toward acidic residues. Positions alanine 17–alanine 36 are disordered. The TF-B3 DNA-binding region spans phenylalanine 71 to histidine 168.

It localises to the nucleus. This is Putative B3 domain-containing protein Os08g0157700 from Oryza sativa subsp. japonica (Rice).